Consider the following 224-residue polypeptide: BTB/POZ domain-containing protein At5g48510 (224 aa).

The 75-residue stretch at 24–98 (VDVMLKAKNS…ICSDGSMLSA (75 aa)) folds into the BTB domain.

In terms of assembly, interacts with CUL3A.

Its pathway is protein modification; protein ubiquitination. Its function is as follows. May act as a substrate-specific adapter of an E3 ubiquitin-protein ligase complex (CUL3-RBX1-BTB) which mediates the ubiquitination and subsequent proteasomal degradation of target proteins. In Arabidopsis thaliana (Mouse-ear cress), this protein is BTB/POZ domain-containing protein At5g48510.